The chain runs to 311 residues: uncharacterized protein (311 aa).

Positions 1-13 are cleaved as a signal peptide; the sequence is MLLSLIFPIAVLG. N-linked (GlcNAc...) asparagine glycosylation occurs at asparagine 115.

The protein resides in the secreted. This is an uncharacterized protein from Encephalitozoon cuniculi (strain GB-M1) (Microsporidian parasite).